The primary structure comprises 384 residues: CDP-diacylglycerol--serine O-phosphatidyltransferase (384 aa).

It belongs to the CDP-alcohol phosphatidyltransferase class-I family.

The protein localises to the membrane. The catalysed reaction is a CDP-1,2-diacyl-sn-glycerol + L-serine = a 1,2-diacyl-sn-glycero-3-phospho-L-serine + CMP + H(+). It functions in the pathway phospholipid metabolism; phosphatidylethanolamine biosynthesis; phosphatidylethanolamine from CDP-diacylglycerol: step 1/2. The chain is CDP-diacylglycerol--serine O-phosphatidyltransferase (PSS) from Encephalitozoon cuniculi (strain GB-M1) (Microsporidian parasite).